The sequence spans 301 residues: Large ribosomal subunit protein uL18y (301 aa).

The tract at residues 247 to 267 is disordered; the sequence is RAEPNHKKTEKSAPKEHKRYN. Positions 249–261 are enriched in basic and acidic residues; it reads EPNHKKTEKSAPK.

This sequence belongs to the universal ribosomal protein uL18 family. In terms of assembly, component of the large ribosomal subunit (LSU).

It is found in the cytoplasm. The protein resides in the nucleus. The protein localises to the nucleolus. It localises to the nucleoplasm. Functionally, component of the ribosome, a large ribonucleoprotein complex responsible for the synthesis of proteins in the cell. The small ribosomal subunit (SSU) binds messenger RNAs (mRNAs) and translates the encoded message by selecting cognate aminoacyl-transfer RNA (tRNA) molecules. The large subunit (LSU) contains the ribosomal catalytic site termed the peptidyl transferase center (PTC), which catalyzes the formation of peptide bonds, thereby polymerizing the amino acids delivered by tRNAs into a polypeptide chain. The nascent polypeptides leave the ribosome through a tunnel in the LSU and interact with protein factors that function in enzymatic processing, targeting, and the membrane insertion of nascent chains at the exit of the ribosomal tunnel. Seems involved in the regulation of cell proliferation. Essential in leaf polarity establishment, probably having a role for translation in leaf dorsoventral patterning to specify leaf adaxial identity. The chain is Large ribosomal subunit protein uL18y from Arabidopsis thaliana (Mouse-ear cress).